We begin with the raw amino-acid sequence, 120 residues long: Cu-Zn superoxide dismutase-like protein OPG175 (120 aa).

The cysteines at positions 52 and 102 are disulfide-linked.

This sequence belongs to the Cu-Zn superoxide dismutase family.

The protein localises to the virion. It localises to the host cytoplasm. Functionally, superoxide dismutase-like protein with no enzymatic activity. The polypeptide is Cu-Zn superoxide dismutase-like protein OPG175 (OPG175) (Vaccinia virus (strain Tashkent) (VACV)).